A 285-amino-acid chain; its full sequence is uncharacterized protein (285 aa).

This is an uncharacterized protein from Borreliella burgdorferi (strain ATCC 35210 / DSM 4680 / CIP 102532 / B31) (Borrelia burgdorferi).